A 549-amino-acid chain; its full sequence is MKSPSSSAEMQSSSPEPAPWKPDFQVYAIVIGLGITNLLAALENTVLTIAAPVVLTDLELGENFIWVTNAFFLSSTAILPLFGQFSNIFGRRYVMLTAVAIFVLGSGLCGGASTGAMLIAGRAIQGVGSGGIIMLSSIIISDLVPLRQRGNFSAILMSILGIGSALGPLIGGAIVSSISWRWVFYLNLPIGGVSFVFLFIFLRVKYNKEMTFWQKIKRIDLVGNAIVIASTVAILYALSYAGTRYPWRSWHTLVPLLVGFLGLFIFAGLQTTAFSAEPLMPTRFFRAPTSIILAINTFVSAALLYWCLFFLPVFLQSVKLYSPRRAGVALLPISLLGIPGSMVGAIALVRWGRYKPVHIFAFALQTLGLGLFTLFREDTSVAEWAVFQCIVAFGGGMIFTTMLPAFQAFIHERDIAACTAAWYFIRLFGHIWGVAIPAAIFNQRIDTLLGQGAISDPSVSKTIAAGGAYQAASAAFVKQFPGSLQLEIRSVYSQAIQRVFQVSIAFAGVAFLLTLLEKDVGLRKTLETDFGLEKEGAGQQADVEGRSHE.

The next 4 membrane-spanning stretches (helical) occupy residues 29-49 (IVIG…VLTI), 63-83 (NFIW…PLFG), 99-119 (VAIF…AMLI), and 126-146 (GVGS…LVPL). N-linked (GlcNAc...) asparagine glycosylation occurs at Asn-151. 10 consecutive transmembrane segments (helical) span residues 155–175 (ILMS…GAIV), 182–202 (WVFY…FIFL), 221–241 (LVGN…LSYA), 249–269 (SWHT…FAGL), 291–311 (IILA…LFFL), 328–348 (VALL…AIAL), 355–375 (KPVH…FTLF), 390–410 (IVAF…QAFI), 421–441 (AWYF…AAIF), and 502–522 (VSIA…DVGL).

It belongs to the major facilitator superfamily.

The protein resides in the membrane. In terms of biological role, MFS efflux transporter; part of the gene cluster that mediates the biosynthesis of wortmanamides A and B, reduced long-chain polyketides amidated with a specific omega-amino acid, 5-aminopentanoic acid (5PA). This chain is MFS-type transporter TwmF, found in Talaromyces wortmannii (Penicillium wortmannii).